The sequence spans 641 residues: Chaperone protein DnaK (641 aa).

Residue Thr-199 is modified to Phosphothreonine; by autocatalysis. Residues 603–613 (YTQQGGTAGSE) are compositionally biased toward polar residues. Residues 603–641 (YTQQGGTAGSETHSHEKAGGSGGDDVVDAEFEEVRDDKR) form a disordered region. The segment covering 627–641 (DVVDAEFEEVRDDKR) has biased composition (acidic residues).

It belongs to the heat shock protein 70 family.

In terms of biological role, acts as a chaperone. The chain is Chaperone protein DnaK from Methylococcus capsulatus (strain ATCC 33009 / NCIMB 11132 / Bath).